A 235-amino-acid polypeptide reads, in one-letter code: Glucosamine-6-phosphate deaminase (235 aa).

The Proton acceptor; for enolization step role is filled by D62. The For ring-opening step role is filled by N128. Residue H130 is the Proton acceptor; for ring-opening step of the active site. E135 acts as the For ring-opening step in catalysis.

This sequence belongs to the glucosamine/galactosamine-6-phosphate isomerase family. NagB subfamily.

It carries out the reaction alpha-D-glucosamine 6-phosphate + H2O = beta-D-fructose 6-phosphate + NH4(+). It functions in the pathway amino-sugar metabolism; N-acetylneuraminate degradation; D-fructose 6-phosphate from N-acetylneuraminate: step 5/5. In terms of biological role, catalyzes the reversible isomerization-deamination of glucosamine 6-phosphate (GlcN6P) to form fructose 6-phosphate (Fru6P) and ammonium ion. The chain is Glucosamine-6-phosphate deaminase from Streptococcus pneumoniae (strain JJA).